The sequence spans 102 residues: Small ribosomal subunit protein eS24 (102 aa).

The protein belongs to the eukaryotic ribosomal protein eS24 family.

The polypeptide is Small ribosomal subunit protein eS24 (rps24e) (Haloarcula marismortui (strain ATCC 43049 / DSM 3752 / JCM 8966 / VKM B-1809) (Halobacterium marismortui)).